The sequence spans 82 residues: Alpha-defensin 17 (82 aa).

Positions 1–8 (LLAFQVQA) are cleaved as a signal peptide. A disordered region spans residues 1–43 (LLAFQVQADPIQNTDEETKTEEQPGEEDQAVSVSFGDPEGTSL). Residues 9–47 (DPIQNTDEETKTEEQPGEEDQAVSVSFGDPEGTSLQEES) constitute a propeptide that is removed on maturation. Cystine bridges form between Cys-53–Cys-81, Cys-55–Cys-70, and Cys-60–Cys-80.

It belongs to the alpha-defensin family.

Its subcellular location is the secreted. Its function is as follows. Probably contributes to the antimicrobial barrier function of the small bowel mucosa. The protein is Alpha-defensin 17 (Defa17) of Mus musculus (Mouse).